Consider the following 161-residue polypeptide: Endoribonuclease YbeY (161 aa).

Zn(2+) is bound by residues His-120, His-124, and His-130.

The protein belongs to the endoribonuclease YbeY family. Requires Zn(2+) as cofactor.

The protein localises to the cytoplasm. In terms of biological role, single strand-specific metallo-endoribonuclease involved in late-stage 70S ribosome quality control and in maturation of the 3' terminus of the 16S rRNA. This chain is Endoribonuclease YbeY, found in Erythrobacter litoralis (strain HTCC2594).